The chain runs to 277 residues: Phosphonoacetaldehyde hydrolase (277 aa).

The Nucleophile role is filled by Asp20. Mg(2+)-binding residues include Asp20 and Ala22. Lys61 serves as the catalytic Schiff-base intermediate with substrate. Asp194 serves as a coordination point for Mg(2+).

The protein belongs to the HAD-like hydrolase superfamily. PhnX family. In terms of assembly, homodimer. Requires Mg(2+) as cofactor.

It catalyses the reaction phosphonoacetaldehyde + H2O = acetaldehyde + phosphate + H(+). Functionally, involved in phosphonate degradation. In Syntrophobacter fumaroxidans (strain DSM 10017 / MPOB), this protein is Phosphonoacetaldehyde hydrolase.